The primary structure comprises 253 residues: 5'-nucleotidase SurE (253 aa).

Residues Asp8, Asp9, Ser39, and Asn92 each coordinate a divalent metal cation.

Belongs to the SurE nucleotidase family. The cofactor is a divalent metal cation.

It localises to the cytoplasm. The catalysed reaction is a ribonucleoside 5'-phosphate + H2O = a ribonucleoside + phosphate. Nucleotidase that shows phosphatase activity on nucleoside 5'-monophosphates. In Burkholderia thailandensis (strain ATCC 700388 / DSM 13276 / CCUG 48851 / CIP 106301 / E264), this protein is 5'-nucleotidase SurE.